The chain runs to 250 residues: Putative endonuclease (250 aa).

Its function is as follows. Putative endonuclease. In Escherichia coli (Enterobacteria phage T5), this protein is Putative endonuclease.